The sequence spans 734 residues: Photosystem I P700 chlorophyll a apoprotein A2 (734 aa).

A run of 8 helical transmembrane segments spans residues 46–69, 135–158, 175–199, 273–291, 330–353, 369–395, 417–439, and 517–535; these read IFASHFGQLAIIFLWTSGNLFHVA, LYTGALFLLFLSAISLLAGWFHLQ, LNHHLSGLFGVSSLAWTGHLVHVAI, IAHHHLAIAFIFLVAGHMY, LHFQLGLALASLGVITSLVAQHMY, AALYTHHQYIAGFIMTGAFAHGAIFFI, AIISHLSWASLFLGFHTLGLYVH, and FLVHHAIALGLHTTTLILV. Residues Cys559 and Cys568 each contribute to the [4Fe-4S] cluster site. 2 helical membrane passes run 575–596 and 643–665; these read AFYLAVFWMLNTIGWVTFYWHW and LSVWAWMFLFGHLVWATGFMFLI. His654, Met662, and Tyr670 together coordinate chlorophyll a. Residue Trp671 coordinates phylloquinone. A helical transmembrane segment spans residues 707–727; that stretch reads LVGLAHFSVGYIFTYAAFLIA.

This sequence belongs to the PsaA/PsaB family. The PsaA/B heterodimer binds the P700 chlorophyll special pair and subsequent electron acceptors. PSI consists of a core antenna complex that captures photons, and an electron transfer chain that converts photonic excitation into a charge separation. The eukaryotic PSI reaction center is composed of at least 11 subunits. P700 is a chlorophyll a/chlorophyll a' dimer, A0 is one or more chlorophyll a, A1 is one or both phylloquinones and FX is a shared 4Fe-4S iron-sulfur center. serves as cofactor.

It is found in the plastid. The protein localises to the chloroplast thylakoid membrane. The enzyme catalyses reduced [plastocyanin] + hnu + oxidized [2Fe-2S]-[ferredoxin] = oxidized [plastocyanin] + reduced [2Fe-2S]-[ferredoxin]. Functionally, psaA and PsaB bind P700, the primary electron donor of photosystem I (PSI), as well as the electron acceptors A0, A1 and FX. PSI is a plastocyanin-ferredoxin oxidoreductase, converting photonic excitation into a charge separation, which transfers an electron from the donor P700 chlorophyll pair to the spectroscopically characterized acceptors A0, A1, FX, FA and FB in turn. Oxidized P700 is reduced on the lumenal side of the thylakoid membrane by plastocyanin. The sequence is that of Photosystem I P700 chlorophyll a apoprotein A2 from Jasminum nudiflorum (Winter jasmine).